Reading from the N-terminus, the 290-residue chain is Endoplasmic reticulum-Golgi intermediate compartment protein 1 (290 aa).

Over 1–26 (MPFDFRRFDIYRKVPKDLTQPTYTGA) the chain is Cytoplasmic. Residues 27 to 47 (IISICCCLFILFLFLSELTGF) form a helical membrane-spanning segment. At 48–254 (ITTEVVNELY…RRQPLYRFIT (207 aa)) the chain is on the lumenal side. Asparagine 74 is a glycosylation site (N-linked (GlcNAc...) asparagine). Residues 255–275 (TICAIIGGTFTVAGILDSCIF) form a helical membrane-spanning segment. Topologically, residues 276–290 (TASEAWKKIQLGKMH) are cytoplasmic.

The protein belongs to the ERGIC family. As to quaternary structure, may form a heteromeric complex composed of ERGIC1, ERGIC2 and ERGIC3. Within the complex, the interaction with ERGIC3 is direct. Interacts with ERGIC3/ERV46. N-glycosylated.

The protein resides in the endoplasmic reticulum membrane. The protein localises to the endoplasmic reticulum-Golgi intermediate compartment membrane. It localises to the golgi apparatus membrane. Functionally, possible role in transport between endoplasmic reticulum and Golgi. In Homo sapiens (Human), this protein is Endoplasmic reticulum-Golgi intermediate compartment protein 1 (ERGIC1).